Reading from the N-terminus, the 160-residue chain is SsrA-binding protein (160 aa).

The interval 131-160 (KKEYDKRDTERERDAGRELQRAVRNKGKED) is disordered.

The protein belongs to the SmpB family.

Its subcellular location is the cytoplasm. In terms of biological role, required for rescue of stalled ribosomes mediated by trans-translation. Binds to transfer-messenger RNA (tmRNA), required for stable association of tmRNA with ribosomes. tmRNA and SmpB together mimic tRNA shape, replacing the anticodon stem-loop with SmpB. tmRNA is encoded by the ssrA gene; the 2 termini fold to resemble tRNA(Ala) and it encodes a 'tag peptide', a short internal open reading frame. During trans-translation Ala-aminoacylated tmRNA acts like a tRNA, entering the A-site of stalled ribosomes, displacing the stalled mRNA. The ribosome then switches to translate the ORF on the tmRNA; the nascent peptide is terminated with the 'tag peptide' encoded by the tmRNA and targeted for degradation. The ribosome is freed to recommence translation, which seems to be the essential function of trans-translation. This chain is SsrA-binding protein, found in Pseudomonas fluorescens (strain Pf0-1).